The following is a 107-amino-acid chain: Large ribosomal subunit protein mL55 (107 aa).

Residues 1–16 (MLLKQLPQAVQQIRCI) constitute a mitochondrion transit peptide.

Belongs to the mitochondrion-specific ribosomal protein mL55 family. As to quaternary structure, component of the mitochondrial ribosome large subunit (39S) which comprises a 16S rRNA and about 50 distinct proteins. In terms of tissue distribution, ubiquitously expressed (at protein level).

It localises to the mitochondrion. In terms of biological role, involved in mitochondrial biogenesis and G2/M phase cell cycle progression. The chain is Large ribosomal subunit protein mL55 (mRpL55) from Drosophila melanogaster (Fruit fly).